The following is a 390-amino-acid chain: MRVVLIVLDSVGIGEMPDAHLYGDEGSNTIVNTAKAVSGLHLPNMAKLGLGNLDDIPGVEPVKPAEGIYGKMMEKSPGKDTTTGHWEIAGVILKKPFDLFPEGFPKELIEEFERRTGRKVIGNKPASGTEIIKELGPIHEKTGALIVYTSADSVFQIAAKKEIVPLEELYRYCEIARELLNEMGYKVARVIARPFTGEWPNYVRTPERKDFSLEPEGKTLLDVLTENGIPVYGVGKIADIFAGRGVTENYKTKDNNDGIDKTISLMKEKNHDCLIFTNLVDFDTKYGHRNDPVSYAKALEEFDARLPEIMHNLNEDDVLFITADHGCDPTTPSTDHSREMVPLLGYGGRLKKDVYVGIRETFADLGQTIADIFGVPPLENGTSFKNLIWE.

The Mn(2+) site is built by aspartate 9, aspartate 283, histidine 288, aspartate 324, histidine 325, and histidine 336.

It belongs to the phosphopentomutase family. Mn(2+) serves as cofactor.

The protein localises to the cytoplasm. It carries out the reaction 2-deoxy-alpha-D-ribose 1-phosphate = 2-deoxy-D-ribose 5-phosphate. It catalyses the reaction alpha-D-ribose 1-phosphate = D-ribose 5-phosphate. Its pathway is carbohydrate degradation; 2-deoxy-D-ribose 1-phosphate degradation; D-glyceraldehyde 3-phosphate and acetaldehyde from 2-deoxy-alpha-D-ribose 1-phosphate: step 1/2. In terms of biological role, isomerase that catalyzes the conversion of deoxy-ribose 1-phosphate (dRib-1-P) and ribose 1-phosphate (Rib-1-P) to deoxy-ribose 5-phosphate (dRib-5-P) and ribose 5-phosphate (Rib-5-P), respectively. The protein is Phosphopentomutase of Thermotoga maritima (strain ATCC 43589 / DSM 3109 / JCM 10099 / NBRC 100826 / MSB8).